A 443-amino-acid polypeptide reads, in one-letter code: Diels-Alderase poxQ (443 aa).

The signal sequence occupies residues 1-23 (MARIPLEFLSITLPVLLLAYCLA). N-linked (GlcNAc...) asparagine glycans are attached at residues asparagine 78, asparagine 97, and asparagine 145.

Belongs to the Diels-Alderase family.

It functions in the pathway secondary metabolite biosynthesis. Diels-Alderase; part of the gene cluster that mediates the biosynthesis of oxaleimides, cytotoxic compounds containing an unusual disubstituted succinimide moiety. The first step of the pathway is provided by the HR-PKS poxF that serves in a new mode of collaborative biosynthesis with the PKS-NRPS poxE, by providing the olefin containing amino acid substrate via the synthesis of an ACP-bound dec-4-enoate. The cytochrome P450 monooxygenase poxM-catalyzed oxidation at the alpha-position creates the enzyme-bound 2-hydroxydec-4-enoyl-ACP thioester, which may be prone to spontaneous hydrolysis to yield 2-hydroxydec-4-enoic acid due to increased electrophilicity of the carbonyl. 2-hydroxydec-4-enoic acid can then be further oxidized by poxM to yield the alpha-ketoacid 2-oxodec-4-enoicacid, which is reductively aminated by the aminotransferase poxL to yield (S,E)-2-aminodec-4-enoic acid. The Hybrid PKS-NRPS synthetase poxE then performs condensation between the octaketide product of its PKS modules and the amino group of (S,E)-2-aminodec-4-enoic acid which is activated and incorporated by the adenylation domain. The resulting aminoacyl product can be cyclized by the Diels-Alderase PoxQ and reductively released by the reductive (R) domain of poxE to yield an aldehyde intermediate. The released aldehyde is then substrate for a Knoevenagel condensation by the hydrolyase poxO followed by an oxidation at the 5-position of the pyrrolidone ring. The presence of the olefin from the amino acid building block allows for migration of the substituted allyl group to occur. This allylic transposition reaction takes place in a conjugate addition, semipinacol-like fashion to yield a succinimide intermediate. Iterative two-electron oxidations of the C7 methyl of the succinimide intermediate to the carboxylic acid can be catalyzed by one of two remaining cytochrome P450 monooxygenasess poxC or poxD to yield oxaleimide A. Subsequent oxidation yields the maleimide scaffold oxaleimide I. Both oxaleimide A and oxaleimide I can undergo oxidative modifications in the decalin ring to yield the series of products oxaleimides B to H. This is Diels-Alderase poxQ from Penicillium oxalicum (strain 114-2 / CGMCC 5302) (Penicillium decumbens).